We begin with the raw amino-acid sequence, 265 residues long: Triosephosphate isomerase (265 aa).

8 to 10 lines the substrate pocket; that stretch reads NWK. The Electrophile role is filled by H103. Catalysis depends on E182, which acts as the Proton acceptor. Substrate is bound by residues G188, S226, and 247–248; that span reads GG.

Belongs to the triosephosphate isomerase family. Homodimer.

It is found in the cytoplasm. The catalysed reaction is D-glyceraldehyde 3-phosphate = dihydroxyacetone phosphate. It functions in the pathway carbohydrate biosynthesis; gluconeogenesis. The protein operates within carbohydrate degradation; glycolysis; D-glyceraldehyde 3-phosphate from glycerone phosphate: step 1/1. Its function is as follows. Involved in the gluconeogenesis. Catalyzes stereospecifically the conversion of dihydroxyacetone phosphate (DHAP) to D-glyceraldehyde-3-phosphate (G3P). The sequence is that of Triosephosphate isomerase from Psychrobacter sp. (strain PRwf-1).